The sequence spans 199 residues: Protein GrpE (199 aa).

Positions 1-50 (MAKKSTRTTPEDSQASTTDSAATSTASEATQAATSATDDQAEQTTAVDPT) are disordered. Residues 11–46 (EDSQASTTDSAATSTASEATQAATSATDDQAEQTTA) show a composition bias toward low complexity.

Belongs to the GrpE family. Homodimer.

The protein localises to the cytoplasm. Functionally, participates actively in the response to hyperosmotic and heat shock by preventing the aggregation of stress-denatured proteins, in association with DnaK and GrpE. It is the nucleotide exchange factor for DnaK and may function as a thermosensor. Unfolded proteins bind initially to DnaJ; upon interaction with the DnaJ-bound protein, DnaK hydrolyzes its bound ATP, resulting in the formation of a stable complex. GrpE releases ADP from DnaK; ATP binding to DnaK triggers the release of the substrate protein, thus completing the reaction cycle. Several rounds of ATP-dependent interactions between DnaJ, DnaK and GrpE are required for fully efficient folding. In Lactiplantibacillus plantarum (strain ATCC BAA-793 / NCIMB 8826 / WCFS1) (Lactobacillus plantarum), this protein is Protein GrpE.